Reading from the N-terminus, the 325-residue chain is Malate dehydrogenase (325 aa).

NAD(+) is bound at residue 9 to 15; sequence GAAGAIG. Substrate contacts are provided by Arg90 and Arg96. NAD(+) contacts are provided by residues Asn103, Gln110, and 127-129; that span reads VGN. The substrate site is built by Asn129 and Arg160. The Proton acceptor role is filled by His185.

Belongs to the LDH/MDH superfamily. MDH type 2 family.

It catalyses the reaction (S)-malate + NAD(+) = oxaloacetate + NADH + H(+). Functionally, catalyzes the reversible oxidation of malate to oxaloacetate. This chain is Malate dehydrogenase, found in Rubrobacter xylanophilus (strain DSM 9941 / JCM 11954 / NBRC 16129 / PRD-1).